The primary structure comprises 691 residues: Elongation factor G (691 aa).

Residues 8–282 (NKTRNIGIMA…AVVEFLPAPV (275 aa)) enclose the tr-type G domain. Residues 17–24 (AHIDAGKT), 81–85 (DTPGH), and 135–138 (NKMD) contribute to the GTP site.

Belongs to the TRAFAC class translation factor GTPase superfamily. Classic translation factor GTPase family. EF-G/EF-2 subfamily.

It localises to the cytoplasm. In terms of biological role, catalyzes the GTP-dependent ribosomal translocation step during translation elongation. During this step, the ribosome changes from the pre-translocational (PRE) to the post-translocational (POST) state as the newly formed A-site-bound peptidyl-tRNA and P-site-bound deacylated tRNA move to the P and E sites, respectively. Catalyzes the coordinated movement of the two tRNA molecules, the mRNA and conformational changes in the ribosome. The polypeptide is Elongation factor G (Heliobacterium modesticaldum (strain ATCC 51547 / Ice1)).